Consider the following 215-residue polypeptide: Putative serine/threonine-protein kinase YrzF (215 aa).

Residues 27–215 (SEELTLIGKG…HFAQRKRKYS (189 aa)) enclose the Protein kinase domain. Residues 33-41 (IGKGRSAYV) and lysine 54 each bind ATP. The active-site Proton acceptor is the aspartate 135.

The protein belongs to the protein kinase superfamily. Ser/Thr protein kinase family.

It carries out the reaction L-seryl-[protein] + ATP = O-phospho-L-seryl-[protein] + ADP + H(+). The catalysed reaction is L-threonyl-[protein] + ATP = O-phospho-L-threonyl-[protein] + ADP + H(+). The chain is Putative serine/threonine-protein kinase YrzF (yrzF) from Bacillus subtilis (strain 168).